The following is a 68-amino-acid chain: Conotoxin Pu5.5 (68 aa).

An N-terminal signal peptide occupies residues M1–A22. A propeptide spanning residues R23–R49 is cleaved from the precursor.

This sequence belongs to the conotoxin T superfamily. Contains 2 disulfide bonds that can be either 'C1-C3, C2-C4' or 'C1-C4, C2-C3', since these disulfide connectivities have been observed for conotoxins with cysteine framework V (for examples, see AC P0DQQ7 and AC P81755). As to expression, expressed by the venom duct.

The protein resides in the secreted. The protein is Conotoxin Pu5.5 of Conus pulicarius (Flea-bitten cone).